We begin with the raw amino-acid sequence, 884 residues long: Alanine--tRNA ligase (884 aa).

4 residues coordinate Zn(2+): H568, H572, C670, and H674.

This sequence belongs to the class-II aminoacyl-tRNA synthetase family. It depends on Zn(2+) as a cofactor.

Its subcellular location is the cytoplasm. It carries out the reaction tRNA(Ala) + L-alanine + ATP = L-alanyl-tRNA(Ala) + AMP + diphosphate. In terms of biological role, catalyzes the attachment of alanine to tRNA(Ala) in a two-step reaction: alanine is first activated by ATP to form Ala-AMP and then transferred to the acceptor end of tRNA(Ala). Also edits incorrectly charged Ser-tRNA(Ala) and Gly-tRNA(Ala) via its editing domain. In Synechococcus sp. (strain JA-2-3B'a(2-13)) (Cyanobacteria bacterium Yellowstone B-Prime), this protein is Alanine--tRNA ligase.